The chain runs to 609 residues: Glutamine--fructose-6-phosphate aminotransferase [isomerizing] (609 aa).

Residue C2 is the Nucleophile; for GATase activity of the active site. The Glutamine amidotransferase type-2 domain occupies C2 to R218. SIS domains follow at residues A286–L426 and L458–P599. The active-site For Fru-6P isomerization activity is K604.

Homodimer. In pull-down experiments interacts with CedA.

Its subcellular location is the cytoplasm. The enzyme catalyses D-fructose 6-phosphate + L-glutamine = D-glucosamine 6-phosphate + L-glutamate. Functionally, catalyzes the first step in hexosamine metabolism, converting fructose-6P into glucosamine-6P using glutamine as a nitrogen source. The polypeptide is Glutamine--fructose-6-phosphate aminotransferase [isomerizing] (glmS) (Escherichia coli (strain K12)).